Consider the following 228-residue polypeptide: E3 ubiquitin-protein ligase RNF114 (228 aa).

The segment at 29 to 68 adopts an RING-type zinc-finger fold; the sequence is CPVCLEVYEKPVQVPCGHVFCSACLQECLKPKKPVCGVCR. Positions 91 and 94 each coordinate Zn(2+). A C2HC RNF-type zinc finger spans residues 91–110; that stretch reads CHGCRKKFFLSKIRSHVATC. An N6-acetyllysine modification is found at K102. Zn(2+)-binding residues include H106 and C110. K112 bears the N6-acetyllysine mark.

In terms of assembly, interacts with XAF1, the interaction increases XAF1 stability and proapoptotic effects, and may regulate IFN signaling. In terms of processing, autoubiquitinated. Polyubiquitinated in the presence of E2 enzymes UBE2D1, UBE2D2 and UBE2D3, but only monoubiquitinated in the presence of UBE2E1.

It localises to the cytoplasm. Its subcellular location is the nucleus. It carries out the reaction S-ubiquitinyl-[E2 ubiquitin-conjugating enzyme]-L-cysteine + [acceptor protein]-L-lysine = [E2 ubiquitin-conjugating enzyme]-L-cysteine + N(6)-ubiquitinyl-[acceptor protein]-L-lysine.. It participates in protein modification; protein ubiquitination. In terms of biological role, E3 ubiquitin-protein ligase that promotes the ubiquitination of various substrates. In turn, participates in the regulation of many biological processes including cell cycle, apoptosis, osteoclastogenesis as well as innate or adaptive immunity. Acts as negative regulator of NF-kappa-B-dependent transcription by promoting the ubiquitination and stabilization of the NF-kappa-B inhibitor TNFAIP3. May promote the ubiquitination of TRAF6 as well. Also acts as a negative regulator of T-cell activation. Inhibits cellular dsRNA responses and interferon production by targeting MAVS component for proteasomal degradation. Ubiquitinates the CDK inhibitor CDKN1A leading to its degradationand probably also CDKN1B and CDKN1C. This activity stimulates cell cycle G1-to-S phase transition and suppresses cellular senescence. May play a role in spermatogenesis. This Pan troglodytes (Chimpanzee) protein is E3 ubiquitin-protein ligase RNF114 (RNF114).